The primary structure comprises 172 residues: Small ribosomal subunit protein uS13c (172 aa).

Residues 1 to 47 constitute a chloroplast transit peptide; the sequence is MAHTLATPVAPSVSLICNTKLSVSLSSSSLAFRPVNPKNGGGLSIKC.

As to quaternary structure, component of the chloroplast small ribosomal subunit (SSU). Mature 70S chloroplast ribosomes of higher plants consist of a small (30S) and a large (50S) subunit. The 30S small subunit contains 1 molecule of ribosomal RNA (16S rRNA) and 24 different proteins. The 50S large subunit contains 3 rRNA molecules (23S, 5S and 4.5S rRNA) and 33 different proteins. uS13c interacts with translation factor pY (PSRP1).

The protein localises to the plastid. The protein resides in the chloroplast. Functionally, component of the chloroplast ribosome (chloro-ribosome), a dedicated translation machinery responsible for the synthesis of chloroplast genome-encoded proteins, including proteins of the transcription and translation machinery and components of the photosynthetic apparatus. The chain is Small ribosomal subunit protein uS13c (RPS13) from Spinacia oleracea (Spinach).